The primary structure comprises 349 residues: uncharacterized protein (349 aa).

The helical transmembrane segment at 16–36 threads the bilayer; that stretch reads LVITIISTGLIFGMTLVLTGL. Positions 111-139 are disordered; the sequence is FGAPEHGPGMPRVSEGRSPSKPDEVAASS. Residues 124–134 are compositionally biased toward basic and acidic residues; the sequence is SEGRSPSKPDE. 3 consecutive transmembrane segments (helical) span residues 231–251, 284–304, and 307–327; these read ISIVAVLLWIVAVLIVGSVVY, VIALLAAVVGVVLAQVLAPLF, and IVAVPVGAYLALPVAAIVIGL.

Belongs to the ABC-4 integral membrane protein family. In terms of assembly, the complex is composed of two ATP-binding proteins (MT0079), two transmembrane proteins (MT0078) and a solute-binding protein.

The protein localises to the cell membrane. In terms of biological role, probably part of an ABC transporter complex. Probably responsible for the translocation of the substrate across the membrane. This is an uncharacterized protein from Mycobacterium tuberculosis (strain CDC 1551 / Oshkosh).